Here is a 600-residue protein sequence, read N- to C-terminus: ATP-dependent lipid A-core flippase (600 aa).

The next 4 helical transmembrane spans lie at Val26–Leu46, Leu82–Leu102, Val167–Ile187, and Pro266–Leu286. The 292-residue stretch at Leu30–Lys321 folds into the ABC transmembrane type-1 domain. An ABC transporter domain is found at Leu353–Met589. Residue Gly387–Ser394 participates in ATP binding.

Belongs to the ABC transporter superfamily. Lipid exporter (TC 3.A.1.106) family. Homodimer.

It localises to the cell inner membrane. It catalyses the reaction ATP + H2O + lipid A-core oligosaccharideSide 1 = ADP + phosphate + lipid A-core oligosaccharideSide 2.. Involved in lipopolysaccharide (LPS) biosynthesis. Translocates lipid A-core from the inner to the outer leaflet of the inner membrane. Transmembrane domains (TMD) form a pore in the inner membrane and the ATP-binding domain (NBD) is responsible for energy generation. This chain is ATP-dependent lipid A-core flippase, found in Pseudomonas syringae pv. syringae (strain B728a).